A 352-amino-acid chain; its full sequence is uncharacterized protein (352 aa).

The signal sequence occupies residues 1–22; that stretch reads MAIYLDKLKMPIIIGLIVLIIA.

Belongs to the bacterial solute-binding protein 1 family. WtpA subfamily.

This is an uncharacterized protein from Staphylothermus marinus (strain ATCC 43588 / DSM 3639 / JCM 9404 / F1).